A 364-amino-acid chain; its full sequence is Appendage-associated protein (364 aa).

Coiled-coil stretches lie at residues Ile142–Arg196 and Arg288–Lys313.

It localises to the secreted. In terms of biological role, associates with actin filament appendages that are formed in the inclusion appendages of the parasitophorous vacuole during infection of the host erythrocyte. The protein is Appendage-associated protein of Anaplasma marginale (strain Illinois).